We begin with the raw amino-acid sequence, 107 residues long: Iron-binding protein IscA (107 aa).

Residues Cys-35, Cys-99, and Cys-101 each contribute to the Fe cation site.

Belongs to the HesB/IscA family. As to quaternary structure, homodimer; may form tetramers and higher multimers. It depends on Fe cation as a cofactor.

Is able to transfer iron-sulfur clusters to apo-ferredoxin. Multiple cycles of [2Fe2S] cluster formation and transfer are observed, suggesting that IscA acts catalytically. Recruits intracellular free iron so as to provide iron for the assembly of transient iron-sulfur cluster in IscU in the presence of IscS, L-cysteine and the thioredoxin reductase system TrxA/TrxB. The sequence is that of Iron-binding protein IscA from Xenorhabdus nematophila (strain ATCC 19061 / DSM 3370 / CCUG 14189 / LMG 1036 / NCIMB 9965 / AN6).